A 314-amino-acid polypeptide reads, in one-letter code: Lipoyl synthase (314 aa).

7 residues coordinate [4Fe-4S] cluster: Cys-61, Cys-66, Cys-72, Cys-87, Cys-91, Cys-94, and Ser-301. The 218-residue stretch at 73–290 folds into the Radical SAM core domain; that stretch reads FGRGTATFMI…ERIATNLGFS (218 aa).

This sequence belongs to the radical SAM superfamily. Lipoyl synthase family. [4Fe-4S] cluster serves as cofactor.

It is found in the cytoplasm. It carries out the reaction [[Fe-S] cluster scaffold protein carrying a second [4Fe-4S](2+) cluster] + N(6)-octanoyl-L-lysyl-[protein] + 2 oxidized [2Fe-2S]-[ferredoxin] + 2 S-adenosyl-L-methionine + 4 H(+) = [[Fe-S] cluster scaffold protein] + N(6)-[(R)-dihydrolipoyl]-L-lysyl-[protein] + 4 Fe(3+) + 2 hydrogen sulfide + 2 5'-deoxyadenosine + 2 L-methionine + 2 reduced [2Fe-2S]-[ferredoxin]. It participates in protein modification; protein lipoylation via endogenous pathway; protein N(6)-(lipoyl)lysine from octanoyl-[acyl-carrier-protein]: step 2/2. In terms of biological role, catalyzes the radical-mediated insertion of two sulfur atoms into the C-6 and C-8 positions of the octanoyl moiety bound to the lipoyl domains of lipoate-dependent enzymes, thereby converting the octanoylated domains into lipoylated derivatives. This chain is Lipoyl synthase, found in Nitrosomonas eutropha (strain DSM 101675 / C91 / Nm57).